A 181-amino-acid chain; its full sequence is MRISFFLLILAVIIGYAYGYSCPKPCYGNMCCSTSPGNKYYLTDFCGSTSACGPVPSCSGALYFTADSQRFGCGKHLNLCRGSKCVKAQIYDAGPAMWVEQDAGMMIIDASPTICHVLTGGSSCGWSDKFEITATVTSLTDSRPLGPFNVTEEEKAQLFIDHEIAMAQCEAEKTCNGFDLE.

Residues 1 to 19 (MRISFFLLILAVIIGYAYG) form the signal peptide. A propeptide spanning residues 139 to 181 (LTDSRPLGPFNVTEEEKAQLFIDHEIAMAQCEAEKTCNGFDLE) is cleaved from the precursor.

It belongs to the dictyostelium lysozyme family. Contains six disulfide bonds.

It localises to the cytoplasmic vesicle lumen. The catalysed reaction is Hydrolysis of (1-&gt;4)-beta-linkages between N-acetylmuramic acid and N-acetyl-D-glucosamine residues in a peptidoglycan and between N-acetyl-D-glucosamine residues in chitodextrins.. Its function is as follows. Has antibacterial activity. The chain is Lysozyme B (alyB) from Dictyostelium discoideum (Social amoeba).